The chain runs to 297 residues: Tumor necrosis factor receptor superfamily member 27 (297 aa).

The Extracellular portion of the chain corresponds to 1-138 (MDCQENEYRD…AHTVPPREAT (138 aa)). 3 TNFR-Cys repeats span residues 2 to 41 (DCQE…DAHC), 43 to 83 (VCPP…NAIC), and 85 to 118 (DCLP…EVQC). Disulfide bonds link C3–C15, C18–C31, C21–C41, C44–C58, C61–C75, C64–C83, C86–C104, and C107–C118. N74 and N77 each carry an N-linked (GlcNAc...) asparagine glycan. A helical; Signal-anchor for type III membrane protein transmembrane segment spans residues 139-159 (LVALVGSLLVVFALAFLGLFF). Topologically, residues 160–297 (LYCKQIFNRH…LYVPFEVPSL (138 aa)) are cytoplasmic.

As to quaternary structure, associates with TRAF1, TRAF3 and TRAF6.

It is found in the membrane. In terms of biological role, receptor for EDA isoform A2, but not for EDA isoform A1. Mediates the activation of the NF-kappa-B and JNK pathways. Activation seems to be mediated by binding to TRAF3 and TRAF6. The protein is Tumor necrosis factor receptor superfamily member 27 (Eda2r) of Mus musculus (Mouse).